Reading from the N-terminus, the 279-residue chain is Pantothenate synthetase (279 aa).

ATP is bound at residue 26–33 (MGNLHDGH). Residue His-33 is the Proton donor of the active site. Residue Gln-57 coordinates (R)-pantoate. Gln-57 lines the beta-alanine pocket. An ATP-binding site is contributed by 144 to 147 (GKKD). Gln-150 provides a ligand contact to (R)-pantoate. 181-184 (LSSR) contacts ATP.

It belongs to the pantothenate synthetase family. Homodimer.

It is found in the cytoplasm. The catalysed reaction is (R)-pantoate + beta-alanine + ATP = (R)-pantothenate + AMP + diphosphate + H(+). It functions in the pathway cofactor biosynthesis; (R)-pantothenate biosynthesis; (R)-pantothenate from (R)-pantoate and beta-alanine: step 1/1. In terms of biological role, catalyzes the condensation of pantoate with beta-alanine in an ATP-dependent reaction via a pantoyl-adenylate intermediate. The protein is Pantothenate synthetase of Janthinobacterium sp. (strain Marseille) (Minibacterium massiliensis).